We begin with the raw amino-acid sequence, 97 residues long: HssA/B-like protein 38 (97 aa).

The disordered stretch occupies residues 1–29 (MTLFSSISSISNPMTSSKSSISSFGSGTS).

The protein belongs to the hssA/B family.

The chain is HssA/B-like protein 38 (hssl38) from Dictyostelium discoideum (Social amoeba).